The chain runs to 164 residues: Protein eva-1 homolog B (164 aa).

Residues 29 to 49 (GLYFVLGVCFGLLLTLCLLVI) form a helical membrane-spanning segment. The interval 56 to 110 (RSRPRTPAPRRDPRSSTLEPEDEDDEEDEDTMTRLGPDDTLQGQELSTEPDGPLS) is disordered. Positions 74–85 (EPEDEDDEEDED) are enriched in acidic residues. Phosphothreonine occurs at positions 86, 149, and 157.

This sequence belongs to the EVA1 family.

The protein localises to the membrane. The chain is Protein eva-1 homolog B (Eva1b) from Mus musculus (Mouse).